We begin with the raw amino-acid sequence, 585 residues long: Sodium/calcium exchanger NCL (585 aa).

Transmembrane regions (helical) follow at residues 83 to 103, 106 to 126, 149 to 169, 212 to 232, and 239 to 259; these read VFLILVYGFLMFTAATYLSAG, LLLEILGPGIVGGLFLPMLGA, VSVGMGLLAGSTVMLLTVIWG, IMAISVIPFVIVQLPQMLGST, and VLIALILSVLMLISYCVYQVF. 2 consecutive EF-hand domains span residues 299 to 334 and 339 to 374; these read PDEHVIRKLFLTIDANNDGHLSAAELKALIIGISFE and DKDDAVGKVLQDFDKTLDEQVDQEEFVRGIKQWLIQ. Ca(2+) is bound by residues D312, N314, D316, H318, E323, D352, D356, Q358, and E363. 2 consecutive transmembrane segments (helical) span residues 427-447 and 457-477; these read WITIKAALLLLLGAAIAAAFA and FSAATGIPSFFISFIALPLAT. Residue N478 is glycosylated (N-linked (GlcNAc...) asparagine). 3 consecutive transmembrane segments (helical) span residues 505–525, 532–552, and 558–578; these read CGGVTMNNILCLSVFLAIVYV, FSSEVLVILIVCLVMGGFASF, and LWTCFIAYLLYPFSLGLVYIL.

This sequence belongs to the Ca(2+):cation antiporter (CaCA) (TC 2.A.19) family. Expressed in roots, leaves, stems, petals, stamens, ovules and siliques.

Its subcellular location is the cell membrane. The protein resides in the vacuole membrane. Its function is as follows. Possesses sodium/calcium exchanger (NCX) activity when expressed in a heterologous mammalian CHO-K1 cell system. Does not possess cation/proton exchanger (CAX) or sodium/proton (NHX) activity when expressed in a heterologous yeast cell system. Has the ability to bind calcium in vitro. Participates in the maintenance of calcium homeostasis. May play a role in auxin response, diurnal rhythm and flowering time. Involved in salt stress response. The sequence is that of Sodium/calcium exchanger NCL from Arabidopsis thaliana (Mouse-ear cress).